The sequence spans 503 residues: E3 ubiquitin-protein ligase ariadne-1 (503 aa).

A compositionally biased stretch (acidic residues) spans 1-11; the sequence is MDSDNDNDFCD. The segment at 1–40 is disordered; the sequence is MDSDNDNDFCDNVDSGNVSSGDDGDDDFGMEVDLPSSADR. Low complexity predominate over residues 12–21; that stretch reads NVDSGNVSSG. Positions 129–340 are TRIAD supradomain; the sequence is QCEECEICFS…SSWYNCNRYD (212 aa). The Zn(2+) site is built by cysteine 133, cysteine 136, cysteine 150, histidine 152, cysteine 155, cysteine 158, cysteine 178, cysteine 183, cysteine 223, cysteine 228, cysteine 244, cysteine 246, cysteine 251, cysteine 254, histidine 259, cysteine 264, cysteine 291, and cysteine 294. Residues 133 to 183 form an RING-type 1 zinc finger; sequence CEICFSQLPPDSMAGLECGHRFCMPCWHEYLSTKIVAEGLGQTISCAAHGC. An important for interaction with Ubc10 region spans residues 133–201; sequence CEICFSQLPP…VANLVTDARV (69 aa). The segment at 203–264 adopts an IBR-type zinc-finger fold; the sequence is VKYQQLITNS…GENWHDPVKC (62 aa). The segment at 291–322 adopts an RING-type 2; atypical zinc-finger fold; sequence CPRCSVTIEKDGGCNHMVCKNQNCKNEFCWVC. Residue cysteine 304 is part of the active site. Positions 309, 314, 319, 322, 329, and 336 each coordinate Zn(2+). The stretch at 341 to 361 forms a coiled coil; that stretch reads EDEAKTARDAQEKLRSSLARY.

Belongs to the RBR family. Ariadne subfamily. In terms of assembly, can form homodimers. Interacts (via RING-type 1 zinc finger) with Ubc10. Interacts with the LINC complex member koi. Interacts with park. Interacts with ari-2. Specifically interacts with isoform ECR-A of EcR. In terms of processing, autophosphorylated. As to expression, widely expressed, with prominent levels in the nervous system and female gonads.

It localises to the cytoplasm. The protein resides in the nucleus. It carries out the reaction [E2 ubiquitin-conjugating enzyme]-S-ubiquitinyl-L-cysteine + [acceptor protein]-L-lysine = [E2 ubiquitin-conjugating enzyme]-L-cysteine + [acceptor protein]-N(6)-ubiquitinyl-L-lysine.. In terms of biological role, atypical E3 ubiquitin-protein ligase, which catalyzes ubiquitination of target proteins together with ubiquitin-conjugating enzyme E2 Ubc10. Controls the subcellular localization and morphology of muscle nuclei (myonuclei) by regulating the protein levels and distribution of the LINC (LInker of Nucleoskeleton and Cytoskeleton) complex. Functions by mediating the monoubiquitination of the LINC complex subunit koi leading to its subsequent proteasomal degradation. Appears to function, at least partially redundantly, with the RBR E3 ligase family member park in nuclear localization and morphology. Likely to function in metamorphosis by regulating the proteins levels of EcR isoform A (ECR-A) and its heterodimeric partner usp, via the ubiquitination and subsequent degradation of ECR-A. This Drosophila melanogaster (Fruit fly) protein is E3 ubiquitin-protein ligase ariadne-1.